A 479-amino-acid polypeptide reads, in one-letter code: UPF0164 protein TP_0865 (479 aa).

Residues 1–49 form the signal peptide; it reads MVRMRRRRACSSGGACGCAAVRGARSFLSVRVLGMRIGMSALCLAPLFA.

It belongs to the UPF0164 family.

In Treponema pallidum (strain Nichols), this protein is UPF0164 protein TP_0865.